The primary structure comprises 331 residues: MESHGSGLRRVLLLSFCVAGIWAAYIYQGILQETLSTKKFGEDGKRFEHLAFLNLAQNVICLVWSYIMIKLWSNGGSGGAPWWTYWSAGITNTIGPAMGIEALKYISYPAQVLAKSSKMIPVMLMGSLVYGIRYTLPEYLCTFLVAGGVSMFALLKTSSKTISKLAHPNAPLGYGLCFLNLAFDGFTNATQDSITARYPKTNAWDIMLGMNLWGTIYNMVYMFGLPHGSGFEAVQFCKQHPEAAWDILMYCLCGAVGQNFIFLTISRFGSLANTTITTTRKFVSIVVSSVLSGNPLSSKQWGCVSMVFGGLSYQIYLKWRKLQRMQKKKKA.

8 helical membrane passes run valine 11–leucine 31, histidine 49–isoleucine 69, alanine 80–isoleucine 100, valine 112–isoleucine 132, threonine 135–leucine 155, alanine 170–threonine 190, isoleucine 206–proline 226, and tryptophan 245–isoleucine 265. Residues lysine 327–alanine 331 carry the Di-lysine motif motif.

This sequence belongs to the nucleotide-sugar transporter family. UDP-galactose:UMP antiporter (TC 2.A.7.11) subfamily. As to expression, mostly expressed in flowers, and, to a lower extent, in roots, stems and leaves.

It is found in the endoplasmic reticulum membrane. The protein localises to the golgi apparatus membrane. In terms of biological role, essential sugar transporter required for the transport of UDP-glucose from the cytoplasm into the Golgi and the endoplasmic reticulum. Essential for pollen development and involved in embryo sac progress. The polypeptide is UDP-galactose/UDP-glucose transporter 3 (Arabidopsis thaliana (Mouse-ear cress)).